A 414-amino-acid polypeptide reads, in one-letter code: Probable 1-acylglycerol-3-phosphate O-acyltransferase (414 aa).

Positions 117 to 382 constitute an AB hydrolase-1 domain; sequence PTLVMVHGYG…GGHFVFIDNP (266 aa). Residues 193-197 carry the GXSXG motif; sequence GHSFG. An HXXXXD motif motif is present at residues 375–380; it reads HFVFID.

The protein belongs to the peptidase S33 family. ABHD4/ABHD5 subfamily.

Its subcellular location is the cytoplasm. The catalysed reaction is a 1-acyl-sn-glycero-3-phosphate + an acyl-CoA = a 1,2-diacyl-sn-glycero-3-phosphate + CoA. In terms of biological role, lysophosphatidic acid acyltransferase which functions in phosphatidic acid biosynthesis. May regulate neutral lipid accumulation and participate in the regulation of lipid turnover in vegetative cells. May possess additional triacylglycerol lipase and phospholipase A2 activities in vitro. In Oryza sativa subsp. japonica (Rice), this protein is Probable 1-acylglycerol-3-phosphate O-acyltransferase.